The chain runs to 260 residues: Ribosomal RNA small subunit methyltransferase A (260 aa).

Residues Asn16, Leu18, Gly43, Glu64, Asp86, and Asn108 each coordinate S-adenosyl-L-methionine.

The protein belongs to the class I-like SAM-binding methyltransferase superfamily. rRNA adenine N(6)-methyltransferase family. RsmA subfamily.

Its subcellular location is the cytoplasm. The catalysed reaction is adenosine(1518)/adenosine(1519) in 16S rRNA + 4 S-adenosyl-L-methionine = N(6)-dimethyladenosine(1518)/N(6)-dimethyladenosine(1519) in 16S rRNA + 4 S-adenosyl-L-homocysteine + 4 H(+). Specifically dimethylates two adjacent adenosines (A1518 and A1519) in the loop of a conserved hairpin near the 3'-end of 16S rRNA in the 30S particle. May play a critical role in biogenesis of 30S subunits. The protein is Ribosomal RNA small subunit methyltransferase A of Buchnera aphidicola subsp. Baizongia pistaciae (strain Bp).